Consider the following 163-residue polypeptide: HTH-type transcriptional regulator IscR (163 aa).

One can recognise an HTH rrf2-type domain in the interval R2–N131. The H-T-H motif DNA-binding region spans L28–K51. [2Fe-2S] cluster-binding residues include C92, C98, and C104.

The cofactor is [2Fe-2S] cluster.

Its function is as follows. Regulates the transcription of several operons and genes involved in the biogenesis of Fe-S clusters and Fe-S-containing proteins. In Enterobacter sp. (strain 638), this protein is HTH-type transcriptional regulator IscR.